The sequence spans 503 residues: Cytochrome P450 11B1, mitochondrial (503 aa).

The transit peptide at 1–24 (MALRAKAEVCMAVPWLSLQRAQAL) directs the protein to the mitochondrion. Cysteine 450 provides a ligand contact to heme.

This sequence belongs to the cytochrome P450 family. Heme is required as a cofactor. In terms of tissue distribution, expressed in the zona fasciculata/reticularis of the adrenal cortex.

Its subcellular location is the mitochondrion inner membrane. It carries out the reaction a steroid + 2 reduced [adrenodoxin] + O2 + 2 H(+) = an 11beta-hydroxysteroid + 2 oxidized [adrenodoxin] + H2O. It catalyses the reaction 11-deoxycortisol + 2 reduced [adrenodoxin] + O2 + 2 H(+) = cortisol + 2 oxidized [adrenodoxin] + H2O. The enzyme catalyses 21-hydroxyprogesterone + 2 reduced [adrenodoxin] + O2 + 2 H(+) = corticosterone + 2 oxidized [adrenodoxin] + H2O. It participates in steroid biosynthesis; glucocorticoid biosynthesis. It functions in the pathway steroid hormone biosynthesis. In terms of biological role, a cytochrome P450 monooxygenase involved in the biosynthesis of adrenal corticoids. Catalyzes a variety of reactions that are essential for many species, including detoxification, defense, and the formation of endogenous chemicals like steroid hormones. Steroid 11beta, 18- and 19-hydroxylase with preferred regioselectivity at 11beta, then 18, and lastly 19. Catalyzes the hydroxylation of 11-deoxycortisol and 11-deoxycorticosterone (21-hydroxyprogesterone) at 11beta position, yielding cortisol or corticosterone, respectively, but cannot produce aldosterone. Mechanistically, uses molecular oxygen inserting one oxygen atom into a substrate for hydroxylation and reducing the second into a water molecule. Two electrons are provided by NADPH via a two-protein mitochondrial transfer system comprising flavoprotein FDXR (adrenodoxin/ferredoxin reductase) and nonheme iron-sulfur protein FDX1 or FDX2 (adrenodoxin/ferredoxin). Due to its lack of 18-oxidation activity, it is incapable of generating aldosterone. Could also be involved in the androgen metabolic pathway. The chain is Cytochrome P450 11B1, mitochondrial from Homo sapiens (Human).